The primary structure comprises 91 residues: Class I hydrophobin 3 (91 aa).

The signal sequence occupies residues 1 to 17 (MLFRLFTIPSIALGVLG). Intrachain disulfides connect Cys31–Cys70, Cys35–Cys61, Cys36–Cys53, and Cys71–Cys87.

Belongs to the fungal hydrophobin family. In terms of assembly, self-assembles to form functional amyloid fibrils called rodlets. Self-assembly into fibrillar rodlets occurs spontaneously at hydrophobic:hydrophilic interfaces and the rodlets further associate laterally to form amphipathic monolayers. In terms of tissue distribution, expressed in conidia.

The protein localises to the secreted. It localises to the cell wall. In terms of biological role, aerial growth, conidiation, and dispersal of filamentous fungi in the environment rely upon a capability of their secreting small amphipathic proteins called hydrophobins (HPBs) with low sequence identity. Class I can self-assemble into an outermost layer of rodlet bundles on aerial cell surfaces, conferring cellular hydrophobicity that supports fungal growth, development and dispersal; whereas Class II form highly ordered films at water-air interfaces through intermolecular interactions but contribute nothing to the rodlet structure. HYD3 is a class I hydrophobin located on the conidial surface that activates specifically the humoral and cellular immunity of Metarhizium acridum's own host insect, Locusta migratoria manilensis (Meyen) but not that of other non-host insects. Improves the resistance of locusts to both specialist and generalist fungal pathogens (wide host range) when topically applied to the cuticle, but has no effect on the fungal resistance of other insects, including Spodoptera frugiperda and Galleria mellonella. This Metarhizium acridum (strain CQMa 102) protein is Class I hydrophobin 3.